The sequence spans 301 residues: Ribosomal RNA small subunit methyltransferase A (301 aa).

Asparagine 18, leucine 20, glycine 45, glutamate 66, aspartate 91, and asparagine 112 together coordinate S-adenosyl-L-methionine. The tract at residues 267 to 301 is disordered; it reads PPEAAPVKEKRRMAKNKMTEPANNNLNENSAPEVD. The span at 287-301 shows a compositional bias: polar residues; it reads PANNNLNENSAPEVD.

It belongs to the class I-like SAM-binding methyltransferase superfamily. rRNA adenine N(6)-methyltransferase family. RsmA subfamily.

The protein resides in the cytoplasm. It catalyses the reaction adenosine(1518)/adenosine(1519) in 16S rRNA + 4 S-adenosyl-L-methionine = N(6)-dimethyladenosine(1518)/N(6)-dimethyladenosine(1519) in 16S rRNA + 4 S-adenosyl-L-homocysteine + 4 H(+). Its function is as follows. Specifically dimethylates two adjacent adenosines (A1518 and A1519) in the loop of a conserved hairpin near the 3'-end of 16S rRNA in the 30S particle. May play a critical role in biogenesis of 30S subunits. The sequence is that of Ribosomal RNA small subunit methyltransferase A from Colwellia psychrerythraea (strain 34H / ATCC BAA-681) (Vibrio psychroerythus).